The primary structure comprises 235 residues: Small ribosomal subunit protein eS6 (235 aa).

A phosphoserine mark is found at Ser229 and Ser230.

Belongs to the eukaryotic ribosomal protein eS6 family. In terms of processing, phosphorylated.

The protein is Small ribosomal subunit protein eS6 (RPS6) of Kluyveromyces marxianus (Yeast).